The primary structure comprises 90 residues: Phaiodotoxin (90 aa).

An N-terminal signal peptide occupies residues 1–18 (MKTIPLLFLLFIYFECDG). The LCN-type CS-alpha/beta domain maps to 19–90 (KFIRHKDESF…CFGALESKCA (72 aa)). Intrachain disulfides connect cysteine 31/cysteine 56, cysteine 41/cysteine 68, cysteine 45/cysteine 70, and cysteine 81/cysteine 89.

As to expression, expressed by the venom gland.

It localises to the secreted. Its function is as follows. Sodium channel (Nav) specific neurotoxin. Causes impairment of movement and mild paralysis in crickets at a dose of 0.5 ug per animal. A dose of 0.8 ug per cricket causes clear flaccid paralysis. A dose of 1.0 ug per cricket causes death within 2 hours. Is not toxic to mice at a dose of 100 ug per 20 g mouse weight. The polypeptide is Phaiodotoxin (Anuroctonus phaiodactylus (Mafia scorpion)).